Consider the following 528-residue polypeptide: Na(+)/H(+) antiporter NhaB (528 aa).

Helical transmembrane passes span 25–47 (IISFLVINPIVFYFNPFIAGWLL), 66–86 (PGGLLAIEAVAIGMTSPSQVL), 97–117 (LLLVFMVAGIYFMKQLLLFVF), 130–164 (VSLLFCVSSAFLSAFLDALTVIAVIITVAVGFYSI), 241–261 (IRMSPVTVPVFFAGVTTCFLV), 304–324 (AFIGVWLIAGLALHLASVGLI), 351–371 (ALPFTALLAVFFAIVAVIIDL), 390–410 (LVVFYIANGLLSMVSDNVFVG), 448–468 (ATPNGQAAFLFLLTSAIAPLI), and 476–496 (VWMALPYTIVLSIVGVLAIQL).

It belongs to the NhaB Na(+)/H(+) (TC 2.A.34) antiporter family.

The protein resides in the cell inner membrane. It carries out the reaction 2 Na(+)(in) + 3 H(+)(out) = 2 Na(+)(out) + 3 H(+)(in). Functionally, na(+)/H(+) antiporter that extrudes sodium in exchange for external protons. The protein is Na(+)/H(+) antiporter NhaB of Shewanella halifaxensis (strain HAW-EB4).